Here is a 441-residue protein sequence, read N- to C-terminus: MESNTNSQGQGIIPQSYHSSIFFSISKGSDKIGGLLEYLEIIKKHNINITRIESRPSKTEKKDYDFFLDLEYPTENNKEVEKVIKDLEEKGVKATTLQESSNQTYAPWFPRKISDLDLFANKVLEMGSDLTSDHPGASDPVYRERRREIAKIASTYKHGDEIPRIDYTEEEIKTWGVVYNRLKELFPTNACHQHAYIFPLLEQNCGYSPDNIPQLQDISNFLQECTGWRIRPVQGLLSARDFLNGLAFRVFHATQYIRHPSVPLYTPEPDCCHELLGHVPLLADPDFADFSQEIGLASIGASDEDIQLLSTCYWFTVEFGLCKEGDTIRAYGAGILSSTGEMEHFLTDKAKKLPFNPFDACNTEYPITTFQPLYYVAESFQKAKEQMRQFADSFKKPFSIRYNPYTQSIEILDNKDKLLNICNDIRNQSEILADAISKLKA.

Residues 23–102 (FSISKGSDKI…KATTLQESSN (80 aa)) form the ACT domain. Fe cation contacts are provided by His273, His278, and Glu318.

Belongs to the biopterin-dependent aromatic amino acid hydroxylase family. Homotetramer. Fe(2+) serves as cofactor.

It carries out the reaction (6R)-L-erythro-5,6,7,8-tetrahydrobiopterin + L-phenylalanine + O2 = (4aS,6R)-4a-hydroxy-L-erythro-5,6,7,8-tetrahydrobiopterin + L-tyrosine. The enzyme catalyses (6R)-L-erythro-5,6,7,8-tetrahydrobiopterin + L-tryptophan + O2 = 5-hydroxy-L-tryptophan + (4aS,6R)-4a-hydroxy-L-erythro-5,6,7,8-tetrahydrobiopterin. The protein operates within amino-acid degradation; L-phenylalanine degradation; acetoacetate and fumarate from L-phenylalanine: step 1/6. Its function is as follows. Catalyzes the hydroxylation of L-phenylalanine. Hydroxylates L-tryptophan to 5-hydroxy-L-tryptophan but does not hydroxylate L-tyrosine to L-DOPA. It uses D-threo-tetrahydrodictyopterin (DH4), also known as dictyoperin, as a cofactor. In Dictyostelium discoideum (Social amoeba), this protein is Phenylalanine-4-hydroxylase (pah).